We begin with the raw amino-acid sequence, 160 residues long: MFPFMLFSTLFSSIFTEPREKMWICNSSDASLWYNYCDDMKFPISVKVEPCVTIKGTKGKLHLYYIARRDIQKLYLNLHISIKSMTLPMRKEVICREYGGDYSFCGALKGETVNTTIPFSFQGIRFSPGQYHCVVEAISGNSEEMLFCLNFTIIHYSSLN.

An N-terminal signal peptide occupies residues 1–16 (MFPFMLFSTLFSSIFT). Intrachain disulfides connect C25-C51, C37-C148, and C95-C105. The N-linked (GlcNAc...) asparagine glycan is linked to N26. A glycan (N-linked (GlcNAc...) asparagine) is linked at N114. The interval 119–123 (FSFQG) is interaction with lipopolysaccharide. The N-linked (GlcNAc...) asparagine glycan is linked to N150.

As to quaternary structure, heterogeneous homomer formed from homodimers; disulfide-linked. Belongs to the lipopolysaccharide (LPS) receptor, a multi-protein complex containing at least CD14, LY96 and TLR4. Binds to the extracellular domains of TLR2 and TLR4. Ligand binding induces interaction with TLR4 and oligomerization of the complex. Post-translationally, N-glycosylated.

It localises to the secreted. The protein resides in the extracellular space. Functionally, binds bacterial lipopolysaccharide (LPS). Cooperates with TLR4 in the innate immune response to bacterial lipopolysaccharide (LPS), and with TLR2 in the response to cell wall components from Gram-positive and Gram-negative bacteria. Enhances TLR4-dependent activation of NF-kappa-B. Cells expressing both LY96 and TLR4, but not TLR4 alone, respond to LPS. This chain is Lymphocyte antigen 96 (LY96), found in Bos taurus (Bovine).